The primary structure comprises 211 residues: Ras-related protein rab-11.1 (211 aa).

18–26 (GDSGVGKSN) provides a ligand contact to GTP. Residues 40–48 (SKSTIGVEF) carry the Effector region motif. Residues 66 to 70 (DTAGQ), 124 to 127 (NKSD), and 154 to 156 (SAL) contribute to the GTP site. The segment at 187-211 (GYGGGSGTIIPSPASDPPKKQCCIP) is disordered. S-geranylgeranyl cysteine attachment occurs at residues Cys208 and Cys209.

It belongs to the small GTPase superfamily. Rab family. Interacts with rei-1 and rei-2. The GDP-form preferentially binds to rei-1 and rei-2. Expressed weakly in sperm, but more predominantly in oocytes. Expressed in the intestine.

It is found in the cytoplasmic vesicle. The protein resides in the secretory vesicle. It localises to the endosome. The protein localises to the cytoplasm. Its subcellular location is the cytoskeleton. It is found in the spindle. The protein resides in the microtubule organizing center. It localises to the spindle pole body. The protein localises to the centrosome. Its subcellular location is the apical cell membrane. It is found in the cytosol. The protein resides in the recycling endosome membrane. It localises to the golgi apparatus membrane. The protein localises to the cytoplasmic granule. In terms of biological role, the small GTPases Rab are key regulators of intracellular membrane trafficking, from the formation of transport vesicles to their fusion with membranes. Rabs cycle between an inactive GDP-bound form and an active GTP-bound form that is able to recruit to membranes different set of downstream effectors directly responsible for vesicle formation, movement, tethering and fusion. Involved in regulating the meiotic maturation of oocytes. Plays a role in egg shell formation, regulating exocytosis of chondroitin proteoglycans following fertilization. Controls cortical granule localization and targets them to the plasma membrane for exocytosis. Acts as a major regulator of membrane delivery during cytokinesis. Regulates the cytoskeleton by facilitating astral microtubule elongation and organization during metaphase to ensure proper spindle alignment and polarity in the first embryonic cell division. Maintains normal endoplasmic reticulum morphology during metaphase. Involved in vesicle formation and plasma membrane repair following exposure to pore forming toxins. Regulates endocytic recycling. May play a role in yolk receptor endocytosis in growing oocytes. Plays a role in the shedding of pathogen spores from intestinal cells via its involvement in spore fusion and endocytic trafficking. This is Ras-related protein rab-11.1 from Caenorhabditis elegans.